A 155-amino-acid chain; its full sequence is Ribosomal RNA large subunit methyltransferase H (155 aa).

S-adenosyl-L-methionine is bound by residues Leu-73, Gly-104, and 123-128 (LSPLTL).

This sequence belongs to the RNA methyltransferase RlmH family. Homodimer.

It is found in the cytoplasm. The enzyme catalyses pseudouridine(1915) in 23S rRNA + S-adenosyl-L-methionine = N(3)-methylpseudouridine(1915) in 23S rRNA + S-adenosyl-L-homocysteine + H(+). Functionally, specifically methylates the pseudouridine at position 1915 (m3Psi1915) in 23S rRNA. This chain is Ribosomal RNA large subunit methyltransferase H, found in Pseudomonas aeruginosa (strain UCBPP-PA14).